The following is a 775-amino-acid chain: 5-methyltetrahydropteroyltriglutamate--homocysteine methyltransferase (775 aa).

Residues 16-19 (REMK) and lysine 115 each bind 5-methyltetrahydropteroyltri-L-glutamate. L-homocysteine-binding positions include 435-437 (IGS) and glutamate 488. L-methionine-binding positions include 435 to 437 (IGS) and glutamate 488. Residues 519–520 (RC) and tryptophan 565 contribute to the 5-methyltetrahydropteroyltri-L-glutamate site. Aspartate 603 contacts L-homocysteine. L-methionine is bound at residue aspartate 603. Glutamate 609 lines the 5-methyltetrahydropteroyltri-L-glutamate pocket. The Zn(2+) site is built by histidine 645, cysteine 647, and glutamate 669. Catalysis depends on histidine 698, which acts as the Proton donor. A Zn(2+)-binding site is contributed by cysteine 730.

It belongs to the vitamin-B12 independent methionine synthase family. Zn(2+) serves as cofactor.

It catalyses the reaction 5-methyltetrahydropteroyltri-L-glutamate + L-homocysteine = tetrahydropteroyltri-L-glutamate + L-methionine. It participates in amino-acid biosynthesis; L-methionine biosynthesis via de novo pathway; L-methionine from L-homocysteine (MetE route): step 1/1. In terms of biological role, catalyzes the transfer of a methyl group from 5-methyltetrahydrofolate to homocysteine resulting in methionine formation. In Coxiella burnetii (strain CbuK_Q154) (Coxiella burnetii (strain Q154)), this protein is 5-methyltetrahydropteroyltriglutamate--homocysteine methyltransferase.